The sequence spans 513 residues: Mannan endo-1,4-beta-mannosidase A and B (513 aa).

The signal sequence occupies residues 1-26 (MKVYKKVAFVMAFIMFFSVLPTISMS). Residues 41-353 (QTTKNVYSWL…FNDSWVVNRG (313 aa)) form the GH26 domain. Histidine 132 serves as a coordination point for substrate. Catalysis depends on glutamate 195, which acts as the Proton donor. Positions 200 and 270 each coordinate substrate. The Nucleophile role is filled by glutamate 295. 429–430 (IK) provides a ligand contact to substrate.

The protein belongs to the glycosyl hydrolase 26 family.

The protein localises to the secreted. The enzyme catalyses Random hydrolysis of (1-&gt;4)-beta-D-mannosidic linkages in mannans, galactomannans and glucomannans.. Its function is as follows. Could be involved in the degradation of glucomannan and catalyzes the endo hydrolysis of beta-1,4-linked mannan, galactomannan and glucomannan. In Caldalkalibacillus mannanilyticus (strain DSM 16130 / CIP 109019 / JCM 10596 / AM-001) (Bacillus mannanilyticus), this protein is Mannan endo-1,4-beta-mannosidase A and B.